Consider the following 172-residue polypeptide: dCTP pyrophosphatase (172 aa).

The enzyme catalyses dCTP + H2O = dCMP + diphosphate + H(+). This chain is dCTP pyrophosphatase (56), found in Enterobacteria phage LZ5 (Bacteriophage LZ5).